A 1220-amino-acid polypeptide reads, in one-letter code: Limbin (1220 aa).

Residues Met-1–Gly-29 form the signal peptide. Over Ser-30–Ala-210 the chain is Extracellular. The tract at residues Ser-38–Ser-59 is disordered. Asn-100, Asn-109, and Asn-130 each carry an N-linked (GlcNAc...) asparagine glycan. The helical transmembrane segment at Gly-211–Ala-231 threads the bilayer. The Cytoplasmic portion of the chain corresponds to Arg-232–Asp-1220. Coiled-coil stretches lie at residues Glu-355–Glu-404, Lys-563–Asp-644, Gly-854–Leu-875, and Gln-920–Glu-1005.

Component of the EvC complex composed of EFCAB7, IQCE, EVC2 and EVC; built from two subcomplexes, EVC2:EVC and EFCAB7:IQCE. Interacts with EVC. Interacts (via N-terminal end) with EFCAB7. Interacts (via N-terminal end) with IQCE. In terms of tissue distribution, expressed in long and cranial bones, kidney and heart. Strongly expressed in proliferating chondrocytes, osteoblasts and osteoclasts.

The protein localises to the cell membrane. Its subcellular location is the cytoplasm. It is found in the cytoskeleton. The protein resides in the cilium basal body. It localises to the cell projection. The protein localises to the cilium. Its subcellular location is the cilium membrane. It is found in the nucleus. Component of the EvC complex that positively regulates ciliary Hedgehog (Hh) signaling. Plays a critical role in bone formation and skeletal development. May be involved in early embryonic morphogenesis. This chain is Limbin (Evc2), found in Mus musculus (Mouse).